Reading from the N-terminus, the 29-residue chain is Cyclotide psyleio A (29 aa).

The cyclopeptide (Gly-Asp) cross-link spans 1 to 29; sequence GLPICGETCFTGTCNTPGCSCTYPICTRD. Intrachain disulfides connect C5–C19, C9–C21, and C14–C26.

Post-translationally, this is a cyclic peptide.

Functionally, probably participates in a plant defense mechanism. The sequence is that of Cyclotide psyleio A from Psychotria brachyceras.